An 85-amino-acid chain; its full sequence is Small ribosomal subunit protein uS17 (85 aa).

Belongs to the universal ribosomal protein uS17 family. As to quaternary structure, part of the 30S ribosomal subunit.

In terms of biological role, one of the primary rRNA binding proteins, it binds specifically to the 5'-end of 16S ribosomal RNA. In Haemophilus influenzae (strain 86-028NP), this protein is Small ribosomal subunit protein uS17.